The following is a 186-amino-acid chain: Ribosome-recycling factor (186 aa).

The tract at residues 135 to 164 is disordered; it reads DGMDDLKKAEKDGEIGQDESRAQSERVQKM.

This sequence belongs to the RRF family.

It is found in the cytoplasm. In terms of biological role, responsible for the release of ribosomes from messenger RNA at the termination of protein biosynthesis. May increase the efficiency of translation by recycling ribosomes from one round of translation to another. The sequence is that of Ribosome-recycling factor from Sinorhizobium medicae (strain WSM419) (Ensifer medicae).